We begin with the raw amino-acid sequence, 61 residues long: UPF0434 protein PA14_25520 (61 aa).

The protein belongs to the UPF0434 family.

The chain is UPF0434 protein PA14_25520 from Pseudomonas aeruginosa (strain UCBPP-PA14).